The primary structure comprises 120 residues: Large ribosomal subunit protein P3 (120 aa).

Positions 83–120 (GGGGAAASGGAAAEAPKEEKKEEEKEESDDDMGFSLFD) are disordered.

Belongs to the eukaryotic ribosomal protein P1/P2 family. In terms of processing, phosphorylated.

Plays an important role in the elongation step of protein synthesis. The protein is Large ribosomal subunit protein P3 (RPP3A) of Zea mays (Maize).